The chain runs to 71 residues: Light-harvesting protein B-800/850 alpha chain (71 aa).

At 1–15 the chain is on the cytoplasmic side; that stretch reads MNQGKVWRVVKPTVG. Residues 16–36 form a helical membrane-spanning segment; that stretch reads VPVYLGAVAVTALILHGGLLA. H31 is a binding site for a bacteriochlorophyll. At 37–50 the chain is on the periplasmic side; the sequence is KTDWFGAYWNGGKK. The helical transmembrane segment at 51 to 71 threads the bilayer; that stretch reads AAAAAAAVAPAPVAAPQAPAQ.

This sequence belongs to the antenna complex alpha subunit family. In terms of assembly, an alpha/beta heterodimer conjugated to 3 bacteriochlorophyll molecules. The core complex is formed by different alpha and beta chains, binding bacteriochlorophyll molecules, and arranged most probably in tetrameric structures disposed around the reaction center. The non-pigmented gamma chains may constitute additional components.

It is found in the cell membrane. Antenna complexes are light-harvesting systems, which transfer the excitation energy to the reaction centers. This Rubrivivax gelatinosus (Rhodocyclus gelatinosus) protein is Light-harvesting protein B-800/850 alpha chain (pucA).